A 1591-amino-acid chain; its full sequence is Rho guanine nucleotide exchange factor TIAM1 (1591 aa).

The segment at 1–70 is disordered; that stretch reads MGNAESQNVD…TPSIPQSLAE (70 aa). Residue Gly2 is the site of N-myristoyl glycine attachment. Positions 8 to 19 are enriched in basic and acidic residues; it reads NVDHEFYGEKHA. The segment covering 20-49 has biased composition (basic residues); it reads SLGRKHTSRSLRLSHKTRRTRHASSGKAIH. Over residues 53–67 the composition is skewed to low complexity; the sequence is EVSTRSSSTPSIPQS. A phosphoserine mark is found at Ser231, Ser356, and Ser358. Disordered regions lie at residues 305–380 and 393–422; these read QISL…DRAR and MSTT…SPGQ. Polar residues predominate over residues 340–359; it reads TTDTDLLSRRSNATNSSYSP. Low complexity predominate over residues 367-376; the sequence is GSDSGSSSTG. Polar residues predominate over residues 412–422; that stretch reads QSSGTLSSPGQ. The 116-residue stretch at 434–549 folds into the PH 1 domain; the sequence is VRKAGALAVK…TAIHSACAAA (116 aa). Ser695 is modified (phosphoserine). The 68-residue stretch at 765 to 832 folds into the RBD domain; it reads TPSWFCLPNN…QPEEDIYELL (68 aa). Tyr829 is subject to Phosphotyrosine; by NTRK2. A PDZ domain is found at 845-908; it reads NIHIEKSDAA…NNRAAGTLNS (64 aa). Residues 933–1034 are disordered; sequence GVELLENPPH…TSPQLATTRQ (102 aa). Polar residues predominate over residues 958–975; it reads LTSNPGHSLSSEQGSSAE. Over residues 977-990 the composition is skewed to acidic residues; the sequence is APEEGEGPDLESSD. Positions 1014–1028 are enriched in low complexity; the sequence is PSDSSPSPQDATSPQ. Residues 1040–1234 enclose the DH domain; the sequence is KLRKVICELL…NKVASHINEM (195 aa). In terms of domain architecture, PH 2 spans 1261–1397; sequence DLSMGDLLLH…KSVHSILRDK (137 aa). Tyr1323 bears the Phosphotyrosine mark. Residues Lys1404 and Lys1420 each participate in a glycyl lysine isopeptide (Lys-Gly) (interchain with G-Cter in ubiquitin) cross-link. The disordered stretch occupies residues 1456 to 1481; the sequence is TIDSDAISASSPEKEPQQPAGGGDTD. The residue at position 1519 (Ser1519) is a Phosphoserine.

It belongs to the TIAM family. In terms of assembly, component of the Par polarity complex, composed of at least phosphorylated PRKCZ, PARD3 and TIAM1. Interacts with BAIAP2. Interacts (via PDZ domain) with CNTNAP4, SDC1 and SDC3 (via C-terminus). Interacts with CD44, PARD3 and MAPK8IP2. Interacts with EPHA8; regulates clathrin-mediated endocytosis of EPHA8. Interacts with NTRK2; mediates the activation of RAC1 by BDNF. Ubiquitinated. Undergoes 'Lys-48' ubiquitination at Lys-1404 and Lys-1420 by a CUL3(KBTBD6/7) E3 ubiquitin ligase complex composed of CUL3, RBX1, KBTBD6 and KBTBD7. 'Lys-48' ubiquitination at Lys-1404 and Lys-1420 triggers proteasomal degradation. Ubiquitination at Lys-1404 and Lys-1420 by CUL3(KBTBD6/7) also requires the membrane-associated protein GABARAP and may therefore be spatially restricted within the cell. In terms of tissue distribution, highly expressed in brain and testis and at low or moderate levels in almost all other normal tissues. Found in virtually all analyzed tumor cell lines including B- and T-lymphomas, neuroblastomas, melanomas and carcinomas.

It localises to the cell junction. The protein localises to the cell membrane. Guanyl-nucleotide exchange factor that activates RHO-like proteins and connects extracellular signals to cytoskeletal activities. Activates RAC1, CDC42, and to a lesser extent RHOA and their downstream signaling to regulate processes like cell adhesion and cell migration. The polypeptide is Rho guanine nucleotide exchange factor TIAM1 (Mus musculus (Mouse)).